Consider the following 176-residue polypeptide: RNA pyrophosphohydrolase (176 aa).

A Nudix hydrolase domain is found at 6–149 (GYRPNVGIIL…KRQVYQQALF (144 aa)). The short motif at 38-59 (GGIKHGESPEQAMFRELFEEVG) is the Nudix box element.

It belongs to the Nudix hydrolase family. RppH subfamily. It depends on a divalent metal cation as a cofactor.

Functionally, accelerates the degradation of transcripts by removing pyrophosphate from the 5'-end of triphosphorylated RNA, leading to a more labile monophosphorylated state that can stimulate subsequent ribonuclease cleavage. In Aromatoleum aromaticum (strain DSM 19018 / LMG 30748 / EbN1) (Azoarcus sp. (strain EbN1)), this protein is RNA pyrophosphohydrolase.